The sequence spans 208 residues: FMN-dependent NADH:quinone oxidoreductase (208 aa).

Residues serine 9, 15-17, 96-99, and 140-143 each bind FMN; these read SAS, MYNF, and TRGG.

This sequence belongs to the azoreductase type 1 family. Homodimer. Requires FMN as cofactor.

The catalysed reaction is 2 a quinone + NADH + H(+) = 2 a 1,4-benzosemiquinone + NAD(+). The enzyme catalyses N,N-dimethyl-1,4-phenylenediamine + anthranilate + 2 NAD(+) = 2-(4-dimethylaminophenyl)diazenylbenzoate + 2 NADH + 2 H(+). Functionally, quinone reductase that provides resistance to thiol-specific stress caused by electrophilic quinones. Its function is as follows. Also exhibits azoreductase activity. Catalyzes the reductive cleavage of the azo bond in aromatic azo compounds to the corresponding amines. In Ralstonia nicotianae (strain ATCC BAA-1114 / GMI1000) (Ralstonia solanacearum), this protein is FMN-dependent NADH:quinone oxidoreductase.